A 289-amino-acid polypeptide reads, in one-letter code: Ribosomal RNA small subunit methyltransferase I (289 aa).

This sequence belongs to the methyltransferase superfamily. RsmI family.

It localises to the cytoplasm. It catalyses the reaction cytidine(1402) in 16S rRNA + S-adenosyl-L-methionine = 2'-O-methylcytidine(1402) in 16S rRNA + S-adenosyl-L-homocysteine + H(+). Its function is as follows. Catalyzes the 2'-O-methylation of the ribose of cytidine 1402 (C1402) in 16S rRNA. This is Ribosomal RNA small subunit methyltransferase I from Halalkalibacterium halodurans (strain ATCC BAA-125 / DSM 18197 / FERM 7344 / JCM 9153 / C-125) (Bacillus halodurans).